A 299-amino-acid chain; its full sequence is Pyridoxal 5'-phosphate synthase subunit PdxS (299 aa).

A D-ribose 5-phosphate-binding site is contributed by D24. K81 acts as the Schiff-base intermediate with D-ribose 5-phosphate in catalysis. G153 contacts D-ribose 5-phosphate. R165 is a D-glyceraldehyde 3-phosphate binding site. Residues G219 and G240–S241 contribute to the D-ribose 5-phosphate site.

It belongs to the PdxS/SNZ family. In terms of assembly, in the presence of PdxT, forms a dodecamer of heterodimers.

The catalysed reaction is aldehydo-D-ribose 5-phosphate + D-glyceraldehyde 3-phosphate + L-glutamine = pyridoxal 5'-phosphate + L-glutamate + phosphate + 3 H2O + H(+). Its pathway is cofactor biosynthesis; pyridoxal 5'-phosphate biosynthesis. Catalyzes the formation of pyridoxal 5'-phosphate from ribose 5-phosphate (RBP), glyceraldehyde 3-phosphate (G3P) and ammonia. The ammonia is provided by the PdxT subunit. Can also use ribulose 5-phosphate and dihydroxyacetone phosphate as substrates, resulting from enzyme-catalyzed isomerization of RBP and G3P, respectively. The polypeptide is Pyridoxal 5'-phosphate synthase subunit PdxS (Methanococcus vannielii (strain ATCC 35089 / DSM 1224 / JCM 13029 / OCM 148 / SB)).